We begin with the raw amino-acid sequence, 354 residues long: Clavesin-1 (354 aa).

Positions 118–279 constitute a CRAL-TRIO domain; it reads IKRALIDGFP…EFGGTLPPYD (162 aa). The disordered stretch occupies residues 333 to 354; it reads AGTLKHEEKGENENTQPLLALD. A compositionally biased stretch (basic and acidic residues) spans 335–344; it reads TLKHEEKGEN. Polar residues predominate over residues 345–354; the sequence is ENTQPLLALD.

In terms of assembly, forms a complex with clathrin heavy chain and gamma-adaptin.

It is found in the golgi apparatus. It localises to the trans-Golgi network membrane. The protein resides in the early endosome membrane. The protein localises to the cytoplasmic vesicle. Its subcellular location is the clathrin-coated vesicle. Its function is as follows. Required for normal morphology of late endosomes and/or lysosomes in neurons. Binds phosphatidylinositol 3,5-bisphosphate (PtdIns(3,5)P2). This chain is Clavesin-1 (CLVS1), found in Pongo abelii (Sumatran orangutan).